Consider the following 404-residue polypeptide: Cysteine desulfurase IscS (404 aa).

Residues 75–76, N155, Q183, and 203–205 contribute to the pyridoxal 5'-phosphate site; these read AT and SSH. K206 bears the N6-(pyridoxal phosphate)lysine mark. T243 is a binding site for pyridoxal 5'-phosphate. C328 functions as the Cysteine persulfide intermediate in the catalytic mechanism. Residue C328 participates in [2Fe-2S] cluster binding.

This sequence belongs to the class-V pyridoxal-phosphate-dependent aminotransferase family. NifS/IscS subfamily. Homodimer. Forms a heterotetramer with IscU, interacts with other sulfur acceptors. The cofactor is pyridoxal 5'-phosphate.

It localises to the cytoplasm. It carries out the reaction (sulfur carrier)-H + L-cysteine = (sulfur carrier)-SH + L-alanine. Its pathway is cofactor biosynthesis; iron-sulfur cluster biosynthesis. Its function is as follows. Master enzyme that delivers sulfur to a number of partners involved in Fe-S cluster assembly, tRNA modification or cofactor biosynthesis. Catalyzes the removal of elemental sulfur atoms from cysteine to produce alanine. Functions as a sulfur delivery protein for Fe-S cluster synthesis onto IscU, an Fe-S scaffold assembly protein, as well as other S acceptor proteins. The polypeptide is Cysteine desulfurase IscS (Haemophilus influenzae (strain PittGG)).